Reading from the N-terminus, the 432-residue chain is Adenylosuccinate synthetase (432 aa).

Residues 12 to 18 (GDEGKGK) and 40 to 42 (GHT) each bind GTP. Aspartate 13 functions as the Proton acceptor in the catalytic mechanism. Residues aspartate 13 and glycine 40 each coordinate Mg(2+). IMP contacts are provided by residues 13 to 16 (DEGK), 38 to 41 (NAGH), threonine 132, arginine 146, glutamine 226, threonine 241, and arginine 305. Histidine 41 (proton donor) is an active-site residue. Substrate is bound at residue 301–307 (TVTGRKR). GTP is bound by residues arginine 307, 333–335 (KLD), and 415–417 (STS).

It belongs to the adenylosuccinate synthetase family. As to quaternary structure, homodimer. The cofactor is Mg(2+).

It is found in the cytoplasm. It carries out the reaction IMP + L-aspartate + GTP = N(6)-(1,2-dicarboxyethyl)-AMP + GDP + phosphate + 2 H(+). It participates in purine metabolism; AMP biosynthesis via de novo pathway; AMP from IMP: step 1/2. In terms of biological role, plays an important role in the de novo pathway of purine nucleotide biosynthesis. Catalyzes the first committed step in the biosynthesis of AMP from IMP. The chain is Adenylosuccinate synthetase from Allorhizobium ampelinum (strain ATCC BAA-846 / DSM 112012 / S4) (Agrobacterium vitis (strain S4)).